The sequence spans 201 residues: Small ribosomal subunit protein uS4c (201 aa).

Positions 15 to 43 (LGALPGLTRKRPRSGSDLRNQSRSGKRSQ) are disordered. Residues 89–150 (MRLDNILFRL…EQRSRALIQN (62 aa)) form the S4 RNA-binding domain.

Belongs to the universal ribosomal protein uS4 family. Part of the 30S ribosomal subunit. Contacts protein S5. The interaction surface between S4 and S5 is involved in control of translational fidelity.

Its subcellular location is the plastid. It localises to the chloroplast. Its function is as follows. One of the primary rRNA binding proteins, it binds directly to 16S rRNA where it nucleates assembly of the body of the 30S subunit. With S5 and S12 plays an important role in translational accuracy. This Drimys granadensis protein is Small ribosomal subunit protein uS4c (rps4).